The following is a 102-amino-acid chain: Small ribosomal subunit protein uS10 (102 aa).

Belongs to the universal ribosomal protein uS10 family. Part of the 30S ribosomal subunit.

Functionally, involved in the binding of tRNA to the ribosomes. This is Small ribosomal subunit protein uS10 from Phenylobacterium zucineum (strain HLK1).